The primary structure comprises 433 residues: Pectinesterase B (433 aa).

The N-terminal stretch at 1–21 (MSLTHYSGLAAAVSMSLILTA) is a signal peptide. The N-palmitoyl cysteine moiety is linked to residue Cys-22. Cys-22 is lipidated: S-diacylglycerol cysteine. The Periplasmic segment spans residues 22 to 433 (CGGQTPNSAR…EYNTQVLLHE (412 aa)). Residues Thr-202 and Gln-236 each contribute to the substrate site. Asp-259 serves as the catalytic Proton donor. Asp-292 functions as the Nucleophile in the catalytic mechanism. The substrate site is built by Arg-356 and Trp-358.

Belongs to the pectinesterase family.

The protein localises to the cell outer membrane. It catalyses the reaction [(1-&gt;4)-alpha-D-galacturonosyl methyl ester](n) + n H2O = [(1-&gt;4)-alpha-D-galacturonosyl](n) + n methanol + n H(+). It participates in glycan metabolism; pectin degradation; 2-dehydro-3-deoxy-D-gluconate from pectin: step 1/5. Functionally, probably involved in the degradation of methylated oligogalacturonides present in the periplasm. More active on methylated oligogalacturides than on pectin. The polypeptide is Pectinesterase B (Dickeya dadantii (strain 3937) (Erwinia chrysanthemi (strain 3937))).